The following is a 572-amino-acid chain: MDNLVLCEANNVPLTPITFLKRASECYPNRTSIIYGQTRFTWPQTYDRCCRLAASLLSLNITRNDVVSILAPNVPAMYEMHFSVPMTGAVLNPINTRLDAKTIAIILRHAEPKILFVDYEFAPLIQEVLRLIPTYQSQPHPRIILINEIDSTTKPFSKELDYEGLIRKGEPTPSSSASMFRVHNEHDPISLNYTSGTTADPKGVVISHQGAYLSALSSIIGWEMGIFPVYLWTLPMFHCNGWTHTWSVAARGGTNVCIRHVTAPEIYKNIELHGVTHMSCVPTVFRFLLEGSRTDQSPKSSPVQVLTGGSSPPAVLIKKVEQLGFHVMHGYGLTEATGPVLFCEWQDEWNKLPEHQQIELQQRQGVRNLTLADVDVKNTKTLESVPRDGKTMGEIVIKGSSLMKGYLKNPKATSEAFKHGWLNTGDIGVIHPDGYVEIKDRSKDIIISGGENISSIEVEKVLYMYQEVLEAAVVAMPHPLWGETPCAFVVLKKGEEGLVTSEGDLIKYCRENMPHFMCPKKVVFFQELPKNSNGKILKSKLRDIAKALVVREDDAGSKKVHQRSIEHVSSRL.

The short motif at 570–572 (SRL) is the Microbody targeting signal element.

The protein belongs to the ATP-dependent AMP-binding enzyme family. Expressed in flowers.

It is found in the peroxisome. It catalyses the reaction a medium-chain fatty acid + ATP + CoA = a medium-chain fatty acyl-CoA + AMP + diphosphate. Functionally, butyrate--CoA ligase that is active in vitro with medium-chain fatty acids, with a preference for hexanoate and octanoate. In Arabidopsis thaliana (Mouse-ear cress), this protein is Butyrate--CoA ligase AAE11, peroxisomal (AAE11).